Consider the following 348-residue polypeptide: GMP reductase (348 aa).

An NADP(+)-binding site is contributed by 108–131; sequence ADFQKTKDVMALSDELIFICIDIA. K(+) is bound by residues G181 and G183. The active-site Thioimidate intermediate is the C186. 216-239 provides a ligand contact to NADP(+); it reads IIGDGGCACAGDVAKAFGGGADFV.

The protein belongs to the IMPDH/GMPR family. GuaC type 1 subfamily. Homotetramer.

The enzyme catalyses IMP + NH4(+) + NADP(+) = GMP + NADPH + 2 H(+). Functionally, catalyzes the irreversible NADPH-dependent deamination of GMP to IMP. It functions in the conversion of nucleobase, nucleoside and nucleotide derivatives of G to A nucleotides, and in maintaining the intracellular balance of A and G nucleotides. This is GMP reductase from Vibrio vulnificus (strain CMCP6).